The sequence spans 407 residues: MVLAAPLLLGFLLLALELRPRGEAAEGPAAAAAAAAAAAAAGVGGERSSRPAPSVAPEPDGCPVCVWRQHSRELRLESIKSQILSKLRLKEAPNISREVVKQLLPKAPPLQQILDLHDFQGDALQPEDFLEEDEYHATTETVISMAQETDPAVQTDGSPLCCHFHFSPKVMFTKVLKAQLWVYLRPVPRPATVYLQILRLKPLTGEGTAGGGGGGRRHIRIRSLKIELHSRSGHWQSIDFKQVLHSWFRQPQSNWGIEINAFDPSGTDLAVTSLGPGAEGLHPFMELRVLENTKRSRRNLGLDCDEHSSESRCCRYPLTVDFEAFGWDWIIAPKRYKANYCSGQCEYMFMQKYPHTHLVQQANPRGSAGPCCTPTKMSPINMLYFNDKQQIIYGKIPGMVVDRCGCS.

The first 24 residues, 1 to 24 (MVLAAPLLLGFLLLALELRPRGEA), serve as a signal peptide directing secretion. The propeptide occupies 25–298 (AEGPAAAAAA…VLENTKRSRR (274 aa)). The N-linked (GlcNAc...) asparagine glycan is linked to Asn94. Cystine bridges form between Cys304/Cys314, Cys313/Cys372, Cys341/Cys404, and Cys345/Cys406.

It belongs to the TGF-beta family. In terms of assembly, homodimer; disulfide-linked. Interacts directly with ACVR2B. Interacts directly with ACVR2A. Interacts with ACVR1B, TGFBR1 and ACVR1C in an ACVR2B-dependent manner. Interacts with FST isoform 2/FS-288. Post-translationally, synthesized as large precursor molecule that undergoes proteolytic cleavage by furin-like proteases. This produces an inactive form consisting of the mature C-terminal portion non-covalently bound to its cleaved N-terminal propeptide. Activation of the mature form requires additional cleavage of the propeptide by a tolloid-like metalloproteinase. In the embryo, strong expression is seen in the palatal epithelia, including the medial edge epithelial and midline epithelial seam of the palatal shelves. Less pronounced expression is also seen throughout the palatal shelf and tongue mesenchyme.

The protein localises to the secreted. Functionally, secreted signal that acts globally to regulate anterior/posterior axial patterning during development. May play critical roles in patterning both mesodermal and neural tissues. It is required for proper vertebral patterning and orofacial development. Signals through activin receptors type-2, ACVR2A and ACVR2B, and activin receptors type-1, ACVR1B, ACVR1C and TGFBR1 leading to the phosphorylation of SMAD2 and SMAD3. The protein is Growth/differentiation factor 11 (GDF11) of Homo sapiens (Human).